The primary structure comprises 116 residues: Nitrogenase-stabilizing/protective protein NifW (116 aa).

It belongs to the NifW family. As to quaternary structure, homotrimer; associates with NifD.

Its function is as follows. May protect the nitrogenase Fe-Mo protein from oxidative damage. In Rhodopseudomonas palustris (strain ATCC BAA-98 / CGA009), this protein is Nitrogenase-stabilizing/protective protein NifW.